Here is a 560-residue protein sequence, read N- to C-terminus: Membrane protein insertase YidC (560 aa).

6 consecutive transmembrane segments (helical) span residues 5 to 25 (IINL…WQYF), 334 to 354 (AIDF…MNFF), 357 to 377 (YVGN…LLMF), 431 to 451 (LPIL…YVTI), 476 to 496 (LFGL…WPIL), and 522 to 542 (FMPL…LIYW).

Belongs to the OXA1/ALB3/YidC family. Type 1 subfamily. Interacts with the Sec translocase complex via SecD. Specifically interacts with transmembrane segments of nascent integral membrane proteins during membrane integration.

The protein localises to the cell inner membrane. Functionally, required for the insertion and/or proper folding and/or complex formation of integral membrane proteins into the membrane. Involved in integration of membrane proteins that insert both dependently and independently of the Sec translocase complex, as well as at least some lipoproteins. Aids folding of multispanning membrane proteins. This chain is Membrane protein insertase YidC, found in Rickettsia akari (strain Hartford).